The sequence spans 474 residues: Coronin-1C (474 aa).

WD repeat units lie at residues aspartate 25–aspartate 70, glycine 78–serine 118, glycine 128–asparagine 168, methionine 172–aspartate 202, alanine 215–asparagine 249, and aspartate 263–histidine 303. Residues glutamine 436–alanine 474 adopt a coiled-coil conformation. The residue at position 446 (lysine 446) is an N6-acetyllysine.

The protein belongs to the WD repeat coronin family. Binds F-actin. Interacts with RCC2. Interacts preferentially with nucleotide-free and GDP-bound RAC1. Interacts with VIM (via head domain). Isoform 1 and isoform 2 appear as homotrimers, while isoform 3 seems to exist as monomers. Interacts with MICAL2; this interaction recruits MICAL2 to the actin filaments. As to expression, ubiquitous.

The protein resides in the cell membrane. Its subcellular location is the cell projection. The protein localises to the lamellipodium. It localises to the ruffle membrane. It is found in the cytoplasm. The protein resides in the cytoskeleton. Its subcellular location is the cell cortex. The protein localises to the endosome membrane. It localises to the sarcolemma. It is found in the myofibril. The protein resides in the sarcomere. Its subcellular location is the synapse. Plays a role in directed cell migration by regulating the activation and subcellular location of RAC1. Increases the presence of activated RAC1 at the leading edge of migrating cells. Required for normal organization of the cytoskeleton, including the actin cytoskeleton, microtubules and the vimentin intermediate filaments. Plays a role in endoplasmic reticulum-associated endosome fission: localizes to endosome membrane tubules and promotes recruitment of TMCC1, leading to recruitment of the endoplasmic reticulum to endosome tubules for fission. Endosome membrane fission of early and late endosomes is essential to separate regions destined for lysosomal degradation from carriers to be recycled to the plasma membrane. Required for normal cell proliferation, cell migration, and normal formation of lamellipodia. Required for normal distribution of mitochondria within cells. Functionally, involved in myogenic differentiation. The polypeptide is Coronin-1C (Homo sapiens (Human)).